Here is a 215-residue protein sequence, read N- to C-terminus: LexA repressor (215 aa).

The segment at residues 28–48 (RAEIAAELGFSSPNAAEEHLR) is a DNA-binding region (H-T-H motif). Residues Ser133 and Lys170 each act as for autocatalytic cleavage activity in the active site.

Belongs to the peptidase S24 family. As to quaternary structure, homodimer.

It catalyses the reaction Hydrolysis of Ala-|-Gly bond in repressor LexA.. Represses a number of genes involved in the response to DNA damage (SOS response), including recA and lexA. In the presence of single-stranded DNA, RecA interacts with LexA causing an autocatalytic cleavage which disrupts the DNA-binding part of LexA, leading to derepression of the SOS regulon and eventually DNA repair. The chain is LexA repressor from Burkholderia vietnamiensis (strain G4 / LMG 22486) (Burkholderia cepacia (strain R1808)).